Reading from the N-terminus, the 310-residue chain is Putative S-adenosyl-L-methionine-dependent methyltransferase MMAR_3534 (310 aa).

S-adenosyl-L-methionine contacts are provided by residues Asp-131 and 160–161 (DL).

It belongs to the UPF0677 family.

In terms of biological role, exhibits S-adenosyl-L-methionine-dependent methyltransferase activity. The polypeptide is Putative S-adenosyl-L-methionine-dependent methyltransferase MMAR_3534 (Mycobacterium marinum (strain ATCC BAA-535 / M)).